The following is a 35-amino-acid chain: Tamulustoxin-2 (35 aa).

Intrachain disulfides connect cysteine 2-cysteine 22, cysteine 7-cysteine 31, and cysteine 11-cysteine 33.

The protein belongs to the short scorpion toxin superfamily. Potassium channel inhibitor family. Expressed by the venom gland.

It is found in the secreted. Blocks Kv1.6/KCNA6 potassium channels. In Hottentotta tamulus (Eastern Indian scorpion), this protein is Tamulustoxin-2.